The sequence spans 367 residues: 2-oxoisovalerate dehydrogenase subunit alpha (367 aa).

Residues Phe66, Tyr95, 128–131, and Ser144 contribute to the substrate site; that span reads MPEH. 94–96 lines the thiamine diphosphate pocket; that stretch reads YYR. Thiamine diphosphate-binding positions include 144–146, 174–180, 204–208, and His273; these read SPI, GDGATSE, and NFYAI. Mg(2+) is bound by residues Asp175, Asn204, and Tyr206.

The protein belongs to the BCKDHA family. Heterotetramer of two alpha and two beta chains. Directly associated with ODBB in the E1 complex. It depends on thiamine diphosphate as a cofactor.

It carries out the reaction N(6)-[(R)-lipoyl]-L-lysyl-[protein] + 3-methyl-2-oxobutanoate + H(+) = N(6)-[(R)-S(8)-2-methylpropanoyldihydrolipoyl]-L-lysyl-[protein] + CO2. The branched-chain alpha-keto dehydrogenase complex catalyzes the overall conversion of alpha-keto acids to acyl-CoA and CO(2). It contains multiple copies of three enzymatic components: branched-chain alpha-keto acid decarboxylase (E1), lipoamide acyltransferase (E2) and lipoamide dehydrogenase (E3). The polypeptide is 2-oxoisovalerate dehydrogenase subunit alpha (Thermus thermophilus (strain ATCC 27634 / DSM 579 / HB8)).